A 935-amino-acid chain; its full sequence is Protein translocase subunit SecA (935 aa).

Residues Gln86, Gly104–Thr108, and Asp494 each bind ATP. The disordered stretch occupies residues Glu879 to His935.

The protein belongs to the SecA family. Monomer and homodimer. Part of the essential Sec protein translocation apparatus which comprises SecA, SecYEG and auxiliary proteins SecDF. Other proteins may also be involved.

It localises to the cell membrane. Its subcellular location is the cytoplasm. The enzyme catalyses ATP + H2O + cellular proteinSide 1 = ADP + phosphate + cellular proteinSide 2.. In terms of biological role, part of the Sec protein translocase complex. Interacts with the SecYEG preprotein conducting channel. Has a central role in coupling the hydrolysis of ATP to the transfer of proteins into and across the cell membrane, serving as an ATP-driven molecular motor driving the stepwise translocation of polypeptide chains across the membrane. This is Protein translocase subunit SecA from Leifsonia xyli subsp. xyli (strain CTCB07).